The primary structure comprises 268 residues: Tryptophan synthase alpha chain (268 aa).

Catalysis depends on proton acceptor residues E49 and D60.

The protein belongs to the TrpA family. As to quaternary structure, tetramer of two alpha and two beta chains.

It carries out the reaction (1S,2R)-1-C-(indol-3-yl)glycerol 3-phosphate + L-serine = D-glyceraldehyde 3-phosphate + L-tryptophan + H2O. It functions in the pathway amino-acid biosynthesis; L-tryptophan biosynthesis; L-tryptophan from chorismate: step 5/5. The alpha subunit is responsible for the aldol cleavage of indoleglycerol phosphate to indole and glyceraldehyde 3-phosphate. This Haemophilus influenzae (strain PittEE) protein is Tryptophan synthase alpha chain.